Reading from the N-terminus, the 377-residue chain is Protein ECM9 (377 aa).

May be involved in cell wall organization and biogenesis. In Saccharomyces cerevisiae (strain ATCC 204508 / S288c) (Baker's yeast), this protein is Protein ECM9 (ECM9).